A 235-amino-acid chain; its full sequence is MSNQLIYTGKAKDIYSTEDENVIKSVYKDQATMLNGARKETIKGKGVLNNQISSLIFEKLNAAGVATHFIKRISDTEQLNKKVTIIPLEVVLRNVTAGSFSKRFGVEEGLDLKTPIVEFYYKNDDLDDPFINDEHVKFLDIANDEQIAYIKEETRRINELLKDWFEQIGLRLIDFKLEFGFDKDGKIILADEFSPDNCRLWDAEGHHMDKDVFRRDLGSLTDVYEVVLEKLQGLK.

Belongs to the SAICAR synthetase family.

The enzyme catalyses 5-amino-1-(5-phospho-D-ribosyl)imidazole-4-carboxylate + L-aspartate + ATP = (2S)-2-[5-amino-1-(5-phospho-beta-D-ribosyl)imidazole-4-carboxamido]succinate + ADP + phosphate + 2 H(+). The protein operates within purine metabolism; IMP biosynthesis via de novo pathway; 5-amino-1-(5-phospho-D-ribosyl)imidazole-4-carboxamide from 5-amino-1-(5-phospho-D-ribosyl)imidazole-4-carboxylate: step 1/2. This chain is Phosphoribosylaminoimidazole-succinocarboxamide synthase, found in Streptococcus thermophilus (strain ATCC BAA-250 / LMG 18311).